The following is a 34-amino-acid chain: Somatostatin (34 aa).

The tract at residues 1–20 is disordered; sequence AVERPRQDGQVHEPPGRERK. Cys-23 and Cys-34 are joined by a disulfide.

Belongs to the somatostatin family.

The protein localises to the secreted. Its function is as follows. Somatostatin inhibits the release of somatotropin. The sequence is that of Somatostatin (sst) from Myxine glutinosa (Atlantic hagfish).